A 476-amino-acid chain; its full sequence is Aspartyl/glutamyl-tRNA(Asn/Gln) amidotransferase subunit B (476 aa).

It belongs to the GatB/GatE family. GatB subfamily. In terms of assembly, heterotrimer of A, B and C subunits.

The enzyme catalyses L-glutamyl-tRNA(Gln) + L-glutamine + ATP + H2O = L-glutaminyl-tRNA(Gln) + L-glutamate + ADP + phosphate + H(+). It catalyses the reaction L-aspartyl-tRNA(Asn) + L-glutamine + ATP + H2O = L-asparaginyl-tRNA(Asn) + L-glutamate + ADP + phosphate + 2 H(+). Functionally, allows the formation of correctly charged Asn-tRNA(Asn) or Gln-tRNA(Gln) through the transamidation of misacylated Asp-tRNA(Asn) or Glu-tRNA(Gln) in organisms which lack either or both of asparaginyl-tRNA or glutaminyl-tRNA synthetases. The reaction takes place in the presence of glutamine and ATP through an activated phospho-Asp-tRNA(Asn) or phospho-Glu-tRNA(Gln). The polypeptide is Aspartyl/glutamyl-tRNA(Asn/Gln) amidotransferase subunit B (Lactobacillus gasseri (strain ATCC 33323 / DSM 20243 / BCRC 14619 / CIP 102991 / JCM 1131 / KCTC 3163 / NCIMB 11718 / NCTC 13722 / AM63)).